Here is a 232-residue protein sequence, read N- to C-terminus: Izumo sperm-egg fusion protein 4 (232 aa).

The first 15 residues, 1–15 (MALLLCLVCLTAALA), serve as a signal peptide directing secretion. 2 N-linked (GlcNAc...) asparagine glycosylation sites follow: asparagine 24 and asparagine 219.

It belongs to the Izumo family. Detected in sperm.

Its subcellular location is the secreted. The polypeptide is Izumo sperm-egg fusion protein 4 (IZUMO4) (Homo sapiens (Human)).